Here is a 270-residue protein sequence, read N- to C-terminus: Proteasome inhibitor PI31 subunit (270 aa).

An N-acetylalanine modification is found at alanine 2. The segment at 2–150 (AGLEVLFASA…PIHEQWEKAN (149 aa)) is important for homodimerization and interaction with FBXO7. Position 152 is a phosphoserine (serine 152). Arginine 204 bears the Omega-N-methylarginine mark. Asymmetric dimethylarginine is present on arginine 218. Positions 220–270 (LIDPSSGLPNRLPPGAVPPGARFDPFGPIGTSPSGPNPDHLPPPGYDDMYL) are disordered. At arginine 230 the chain carries Omega-N-methylarginine. Position 251 is a phosphoserine (serine 251). Pro residues predominate over residues 254–264 (GPNPDHLPPPG).

It belongs to the proteasome inhibitor PI31 family. Monomer and homodimer. Interacts with FBXO7.

The protein localises to the cytoplasm. The protein resides in the endoplasmic reticulum. In terms of biological role, plays an important role in control of proteasome function. Inhibits the hydrolysis of protein and peptide substrates by the 20S proteasome. Also inhibits the activation of the proteasome by the proteasome regulatory proteins PA700 and PA28. In Bos taurus (Bovine), this protein is Proteasome inhibitor PI31 subunit (PSMF1).